The primary structure comprises 517 residues: Bifunctional purine biosynthesis protein PurH (517 aa).

One can recognise an MGS-like domain in the interval 1–145 (MSPLALVSVS…KNHKDVSVLV (145 aa)).

This sequence belongs to the PurH family.

The enzyme catalyses (6R)-10-formyltetrahydrofolate + 5-amino-1-(5-phospho-beta-D-ribosyl)imidazole-4-carboxamide = 5-formamido-1-(5-phospho-D-ribosyl)imidazole-4-carboxamide + (6S)-5,6,7,8-tetrahydrofolate. The catalysed reaction is IMP + H2O = 5-formamido-1-(5-phospho-D-ribosyl)imidazole-4-carboxamide. The protein operates within purine metabolism; IMP biosynthesis via de novo pathway; 5-formamido-1-(5-phospho-D-ribosyl)imidazole-4-carboxamide from 5-amino-1-(5-phospho-D-ribosyl)imidazole-4-carboxamide (10-formyl THF route): step 1/1. It functions in the pathway purine metabolism; IMP biosynthesis via de novo pathway; IMP from 5-formamido-1-(5-phospho-D-ribosyl)imidazole-4-carboxamide: step 1/1. This Prochlorococcus marinus (strain MIT 9312) protein is Bifunctional purine biosynthesis protein PurH.